An 86-amino-acid chain; its full sequence is Large ribosomal subunit protein bL27 (86 aa).

A compositionally biased stretch (gly residues) spans 1-10 (MAQKKGGGST). The interval 1-21 (MAQKKGGGSTRNGRDSESKRL) is disordered.

Belongs to the bacterial ribosomal protein bL27 family.

The sequence is that of Large ribosomal subunit protein bL27 from Cupriavidus necator (strain ATCC 17699 / DSM 428 / KCTC 22496 / NCIMB 10442 / H16 / Stanier 337) (Ralstonia eutropha).